A 454-amino-acid polypeptide reads, in one-letter code: 5-hydroxytryptamine receptor 3D (454 aa).

The N-terminal stretch at 1-24 is a signal peptide; the sequence is MQKHSPGPPALALLSQSLLTTGNG. Topologically, residues 25-232 are extracellular; that stretch reads DTLIINCPGF…IRRRCRPSPY (208 aa). Residue N66 is glycosylated (N-linked (GlcNAc...) asparagine). A helical membrane pass occupies residues 233–253; sequence VVNFLVPSGILIAIDALSFYL. Topologically, residues 254–264 are cytoplasmic; the sequence is PLESGNCAPFK. The helical transmembrane segment at 265–285 threads the bilayer; that stretch reads MTVLLGYSVFLLMMNDLLPAT. The Extracellular segment spans residues 286–306; the sequence is STSSHASLVAPLALMQTPLPA. The helical transmembrane segment at 307–327 threads the bilayer; it reads GVYFALCLSLMVGSLLETIFI. The Cytoplasmic segment spans residues 328–431; sequence THLLHVATTQ…WVQFSHAMDA (104 aa). Residues 363–410 form a disordered region; sequence PQKGNKGPGLTPTHLPGVKEPEVSAGQMPGPGEAELTGGSEWTRAQRE. Residues 399–430 form an HA-stretch; determines single-channel conductance in 5-HT3 receptors region; it reads TGGSEWTRAQREHEAQKQHSVELWVQFSHAMD. Residues 432 to 452 traverse the membrane as a helical segment; that stretch reads LLFRLYLLFMASSIITVICLW. Residues 453–454 are Extracellular-facing; that stretch reads NT.

The protein belongs to the ligand-gated ion channel (TC 1.A.9) family. 5-hydroxytryptamine receptor (TC 1.A.9.2) subfamily. HTR3D sub-subfamily. In terms of assembly, forms homopentameric as well as heteropentameric serotonin-activated cation-selective channel complexes with HTR3A. The homomeric complex is not functional. Heteropentameric complexes display properties which resemble that of neuronal serotonin-activated channels in vivo. Expressed in liver, as well as fetal and adult colon and kidney.

Its subcellular location is the postsynaptic cell membrane. The protein localises to the cell membrane. The enzyme catalyses Na(+)(in) = Na(+)(out). It carries out the reaction K(+)(in) = K(+)(out). The catalysed reaction is Ca(2+)(in) = Ca(2+)(out). Functionally, forms serotonin (5-hydroxytryptamine/5-HT3)-activated cation-selective channel complexes, which when activated cause fast, depolarizing responses in neurons. This is 5-hydroxytryptamine receptor 3D from Homo sapiens (Human).